The primary structure comprises 58 residues: Large ribosomal subunit protein uL30 (58 aa).

The protein belongs to the universal ribosomal protein uL30 family. In terms of assembly, part of the 50S ribosomal subunit.

The sequence is that of Large ribosomal subunit protein uL30 from Trichlorobacter lovleyi (strain ATCC BAA-1151 / DSM 17278 / SZ) (Geobacter lovleyi).